Consider the following 571-residue polypeptide: MRMDTLDSQAADAAQEEEIQRKLEELVTLAKDQGFITYEEINEILPPSFDSPEQIDQVLIFLAGMDVQVLNQADVERQKERKKEAKELEGLAKRSEGTPDDPVRMYLKEMGTVPLLTREEEVEISKRIEKAQVQIERIILRFRYSTKEAVSIAQYLINGKERFDKIVSEKEVEDKTHFLNLLPKLISLLKEEDSYLEERLLALKDPALSKQDQAKLNDELEKCRIRTQAYLRCFHCRHNVTEDFGEVVFKAYDSFLQLEQQINDLKVRAERNKFAAAKLAAARRKLYKREVAAGRTLEEFKKDVRMLQRWMDKSQEAKKEMVESNLRLVISIAKKYTNRGLSFLDLIQEGNMGLMKAVEKFEYRRGYKFSTYATWWIRQAVTRAIADQARTIRIPVHMIETINKVLRGAKKLMMETGKEPTPEELGEELGFTPDRVREIYKIAQHPISLQAEVGDSGESSFGDFLEDTAVESPAEATGYSMLKDKMKEVLKTLTDRERFVLIHRFGLLDGRPKTLEEVGSAFNVTRERIRQIEAKALRKMRHPIRSKQLRAFLDLLEEEKTGSGKIKSYKN.

The sigma-70 factor domain-2 stretch occupies residues 321 to 391; it reads MVESNLRLVI…TRAIADQART (71 aa). Positions 345 to 348 match the Interaction with polymerase core subunit RpoC motif; sequence DLIQ. The sigma-70 factor domain-3 stretch occupies residues 400–476; sequence ETINKVLRGA…DTAVESPAEA (77 aa). A sigma-70 factor domain-4 region spans residues 489–542; sequence VLKTLTDRERFVLIHRFGLLDGRPKTLEEVGSAFNVTRERIRQIEAKALRKMRH. The segment at residues 515-534 is a DNA-binding region (H-T-H motif); sequence LEEVGSAFNVTRERIRQIEA.

The protein belongs to the sigma-70 factor family. RpoD/SigA subfamily. As to quaternary structure, interacts transiently with the RNA polymerase catalytic core.

It localises to the cytoplasm. Functionally, sigma factors are initiation factors that promote the attachment of RNA polymerase to specific initiation sites and are then released. This sigma factor is the primary sigma factor during exponential growth. In Chlamydia muridarum (strain MoPn / Nigg), this protein is RNA polymerase sigma factor SigA.